The sequence spans 352 residues: Lipoyl synthase (352 aa).

The disordered stretch occupies residues 1–21 (MTSVDTPTPHGGTPAPAPATA). Positions 71, 76, 82, 97, 101, 104, and 308 each coordinate [4Fe-4S] cluster. Residues 83 to 297 (WEDREATFLI…SRVAEEIGFA (215 aa)) form the Radical SAM core domain.

It belongs to the radical SAM superfamily. Lipoyl synthase family. [4Fe-4S] cluster serves as cofactor.

It localises to the cytoplasm. The catalysed reaction is [[Fe-S] cluster scaffold protein carrying a second [4Fe-4S](2+) cluster] + N(6)-octanoyl-L-lysyl-[protein] + 2 oxidized [2Fe-2S]-[ferredoxin] + 2 S-adenosyl-L-methionine + 4 H(+) = [[Fe-S] cluster scaffold protein] + N(6)-[(R)-dihydrolipoyl]-L-lysyl-[protein] + 4 Fe(3+) + 2 hydrogen sulfide + 2 5'-deoxyadenosine + 2 L-methionine + 2 reduced [2Fe-2S]-[ferredoxin]. Its pathway is protein modification; protein lipoylation via endogenous pathway; protein N(6)-(lipoyl)lysine from octanoyl-[acyl-carrier-protein]: step 2/2. Its function is as follows. Catalyzes the radical-mediated insertion of two sulfur atoms into the C-6 and C-8 positions of the octanoyl moiety bound to the lipoyl domains of lipoate-dependent enzymes, thereby converting the octanoylated domains into lipoylated derivatives. This Nocardia farcinica (strain IFM 10152) protein is Lipoyl synthase.